Here is a 394-residue protein sequence, read N- to C-terminus: Quinolinate synthase (394 aa).

Residues His67 and Ser84 each coordinate iminosuccinate. Cys131 is a [4Fe-4S] cluster binding site. Iminosuccinate contacts are provided by residues 163-165 (YMN) and Ser184. Residue Cys254 participates in [4Fe-4S] cluster binding. Residues 280 to 282 (HPE) and Thr297 each bind iminosuccinate. Cys346 serves as a coordination point for [4Fe-4S] cluster.

This sequence belongs to the quinolinate synthase family. Type 3 subfamily. The cofactor is [4Fe-4S] cluster.

The protein resides in the cytoplasm. The catalysed reaction is iminosuccinate + dihydroxyacetone phosphate = quinolinate + phosphate + 2 H2O + H(+). It participates in cofactor biosynthesis; NAD(+) biosynthesis; quinolinate from iminoaspartate: step 1/1. Its function is as follows. Catalyzes the condensation of iminoaspartate with dihydroxyacetone phosphate to form quinolinate. The chain is Quinolinate synthase from Streptomyces coelicolor (strain ATCC BAA-471 / A3(2) / M145).